The following is a 272-amino-acid chain: GATA zinc finger domain-containing protein 1 (272 aa).

The GATA-type zinc finger occupies C9–C33. The disordered stretch occupies residues T67 to R120. Residue K167 is modified to N6-acetyllysine. K265 is covalently cross-linked (Glycyl lysine isopeptide (Lys-Gly) (interchain with G-Cter in SUMO2)).

Its subcellular location is the nucleus. The chain is GATA zinc finger domain-containing protein 1 (GATAD1) from Bos taurus (Bovine).